The following is a 354-amino-acid chain: S-adenosylmethionine:tRNA ribosyltransferase-isomerase (354 aa).

This sequence belongs to the QueA family. In terms of assembly, monomer.

It localises to the cytoplasm. It carries out the reaction 7-aminomethyl-7-carbaguanosine(34) in tRNA + S-adenosyl-L-methionine = epoxyqueuosine(34) in tRNA + adenine + L-methionine + 2 H(+). It functions in the pathway tRNA modification; tRNA-queuosine biosynthesis. Its function is as follows. Transfers and isomerizes the ribose moiety from AdoMet to the 7-aminomethyl group of 7-deazaguanine (preQ1-tRNA) to give epoxyqueuosine (oQ-tRNA). The sequence is that of S-adenosylmethionine:tRNA ribosyltransferase-isomerase from Pseudomonas syringae pv. tomato (strain ATCC BAA-871 / DC3000).